The chain runs to 125 residues: RutC family protein aq_364 (125 aa).

This sequence belongs to the RutC family.

This Aquifex aeolicus (strain VF5) protein is RutC family protein aq_364.